A 497-amino-acid chain; its full sequence is Probable malate:quinone oxidoreductase (497 aa).

This sequence belongs to the MQO family. The cofactor is FAD.

The enzyme catalyses (S)-malate + a quinone = a quinol + oxaloacetate. It participates in carbohydrate metabolism; tricarboxylic acid cycle; oxaloacetate from (S)-malate (quinone route): step 1/1. The sequence is that of Probable malate:quinone oxidoreductase from Wolinella succinogenes (strain ATCC 29543 / DSM 1740 / CCUG 13145 / JCM 31913 / LMG 7466 / NCTC 11488 / FDC 602W) (Vibrio succinogenes).